We begin with the raw amino-acid sequence, 135 residues long: Transcriptional activator protein (135 aa).

The Nuclear localization signal signature appears at 17 to 32 (KIQHHIAKKRQVRRRR). The segment at 37 to 54 (CGCSYYIHLDCINHGFTH) is a zinc-finger region. Positions 120 to 135 (HLDDLTVSDWSFFKSL) are transactivation.

The protein belongs to the geminiviridae transcriptional activator protein family. Monomer. Homodimer. Homooligomer. Self-interaction correlates with nuclear localization and efficient activation of transcription. Monomers suppress local silencing by interacting with and inactivating host adenosine kinase 2 (ADK2) in the cytoplasm. Interacts with and inhibits host SNF1 kinase. Binds to ssDNA. May interact with host RPS27A. Phosphorylated.

The protein localises to the host nucleus. It localises to the host cytoplasm. Functionally, multifunctional protein that modulates host antiviral defenses and promotes host attractiveness to insect vectors. Acts as a suppressor of RNA-mediated gene silencing, also known as post-transcriptional gene silencing (PTGS), a mechanism of plant viral defense that limits the accumulation of viral RNAs. TrAP suppresses the host RNA silencing by inhibiting adenosine kinase 2 (ADK2), a kinase involved in a general methylation pathway. Also suppresses the host basal defense by interacting with and inhibiting SNF1 kinase, a key regulator of cell metabolism implicated in innate antiviral defense. Its function is as follows. Inhibits signal transduction by the phytohormone jasmonate, making the infected plant more attractive to aphids, which are the second host to play a role as a dissemination vector. Acts by binding to ubiquitin precursor RPS27A, thereby preventing ubiquitin degradation of JAZ. The protein is Transcriptional activator protein of Tomato yellow leaf curl Sardinia virus (isolate Spain-1) (TYLCSV).